A 314-amino-acid chain; its full sequence is Ribonuclease Z (314 aa).

7 residues coordinate Zn(2+): His-61, His-63, Asp-65, His-66, His-139, Asp-211, and His-269. Catalysis depends on Asp-65, which acts as the Proton acceptor.

Belongs to the RNase Z family. In terms of assembly, homodimer. The cofactor is Zn(2+).

The enzyme catalyses Endonucleolytic cleavage of RNA, removing extra 3' nucleotides from tRNA precursor, generating 3' termini of tRNAs. A 3'-hydroxy group is left at the tRNA terminus and a 5'-phosphoryl group is left at the trailer molecule.. Its function is as follows. Zinc phosphodiesterase, which displays some tRNA 3'-processing endonuclease activity. Probably involved in tRNA maturation, by removing a 3'-trailer from precursor tRNA. This is Ribonuclease Z from Gemmatimonas aurantiaca (strain DSM 14586 / JCM 11422 / NBRC 100505 / T-27).